The following is a 236-amino-acid chain: 2-C-methyl-D-erythritol 4-phosphate cytidylyltransferase (236 aa).

This sequence belongs to the IspD/TarI cytidylyltransferase family. IspD subfamily.

It carries out the reaction 2-C-methyl-D-erythritol 4-phosphate + CTP + H(+) = 4-CDP-2-C-methyl-D-erythritol + diphosphate. It participates in isoprenoid biosynthesis; isopentenyl diphosphate biosynthesis via DXP pathway; isopentenyl diphosphate from 1-deoxy-D-xylulose 5-phosphate: step 2/6. Catalyzes the formation of 4-diphosphocytidyl-2-C-methyl-D-erythritol from CTP and 2-C-methyl-D-erythritol 4-phosphate (MEP). In Pseudomonas savastanoi pv. phaseolicola (strain 1448A / Race 6) (Pseudomonas syringae pv. phaseolicola (strain 1448A / Race 6)), this protein is 2-C-methyl-D-erythritol 4-phosphate cytidylyltransferase.